The primary structure comprises 479 residues: Adenosylhomocysteinase (479 aa).

Substrate-binding residues include Thr56, Asp134, and Glu200. 201–203 (TTT) contacts NAD(+). 2 residues coordinate substrate: Lys230 and Asp234. Residues Asn235, 264–269 (GYGDVG), Glu287, Asn322, 343–345 (IGH), and Asn391 each bind NAD(+).

This sequence belongs to the adenosylhomocysteinase family. In terms of assembly, homotetramer. NAD(+) is required as a cofactor.

The enzyme catalyses S-adenosyl-L-homocysteine + H2O = L-homocysteine + adenosine. The protein operates within amino-acid biosynthesis; L-homocysteine biosynthesis; L-homocysteine from S-adenosyl-L-homocysteine: step 1/1. Adenosylhomocysteine is a competitive inhibitor of S-adenosyl-L-methionine-dependent methyl transferase reactions; therefore adenosylhomocysteinase may play a key role in the control of methylations via regulation of the intracellular concentration of adenosylhomocysteine. This chain is Adenosylhomocysteinase, found in Plasmodium falciparum (isolate 3D7).